Consider the following 184-residue polypeptide: UPF0669 protein C6orf120 homolog (184 aa).

Residues 1–23 (MAAPWTGALLLLLASQAVSSAQA) form the signal peptide. The N-linked (GlcNAc...) asparagine glycan is linked to N47.

This sequence belongs to the UPF0669 family.

Its subcellular location is the secreted. Its function is as follows. May be involved in induction of apoptosis in CD4(+) T-cells, but not CD8(+) T-cells or hepatocytes. The polypeptide is UPF0669 protein C6orf120 homolog (Bos taurus (Bovine)).